A 212-amino-acid chain; its full sequence is MSLFDKKHLVSPADALPGRNTPMPVATLHAVNGHSMTNVPDGMEIAIFAMGCFWGVERLFWQLPSVYSTAAGYTGGYTPNPTYREVCSGDTGHAEAVRIVYDPSVISYEQLLQIFWENHDPAQGMRQGNDHGTQYRSAIYPLTPEQDAAARASLERFQAAMLAADDDRRITTEIANATPFYYAEDDHQQYLHKNPYGYCGIGGIGVCLPPEA.

Cys52 is a catalytic residue.

Belongs to the MsrA Met sulfoxide reductase family.

The catalysed reaction is L-methionyl-[protein] + [thioredoxin]-disulfide + H2O = L-methionyl-(S)-S-oxide-[protein] + [thioredoxin]-dithiol. It catalyses the reaction [thioredoxin]-disulfide + L-methionine + H2O = L-methionine (S)-S-oxide + [thioredoxin]-dithiol. Has an important function as a repair enzyme for proteins that have been inactivated by oxidation. Catalyzes the reversible oxidation-reduction of methionine sulfoxide in proteins to methionine. The polypeptide is Peptide methionine sulfoxide reductase MsrA (Shigella dysenteriae serotype 1 (strain Sd197)).